The primary structure comprises 730 residues: Semaphorin-1A (730 aa).

The first 20 residues, Met1–Ala20, serve as a signal peptide directing secretion. The Extracellular portion of the chain corresponds to Trp21–Thr630. The Sema domain occupies Lys28 to Leu490. Asn44 and Asn71 each carry an N-linked (GlcNAc...) asparagine glycan. Cystine bridges form between Cys97–Cys107 and Cys125–Cys134. N-linked (GlcNAc...) asparagine glycans are attached at residues Asn163 and Asn267. 2 cysteine pairs are disulfide-bonded: Cys244/Cys358 and Cys268/Cys317. N-linked (GlcNAc...) asparagine glycosylation is present at Asn360. Intrachain disulfides connect Cys493-Cys512 and Cys504-Cys521. N-linked (GlcNAc...) asparagine glycosylation is present at Asn539. The helical transmembrane segment at Ile631 to Phe651 threads the bilayer. The Cytoplasmic portion of the chain corresponds to Ser652 to Ile730. Residues Ala708–Lys720 show a composition bias toward low complexity. The disordered stretch occupies residues Ala708 to Ile730.

The protein belongs to the semaphorin family. In terms of tissue distribution, dynamically expressed on a subset of axon pathways in the developing CNS and on circumferential bands of epithelial cells in developing limb buds.

Its subcellular location is the membrane. Its function is as follows. Plays a role in growth cones guidance. In Schistocerca americana (American grasshopper), this protein is Semaphorin-1A (SEMA-1A).